A 117-amino-acid chain; its full sequence is Large ribosomal subunit protein eL34 (117 aa).

Residue Ser-12 is modified to Phosphoserine. N6-acetyllysine occurs at positions 36 and 43. A Glycyl lysine isopeptide (Lys-Gly) (interchain with G-Cter in SUMO2) cross-link involves residue Lys-108.

It belongs to the eukaryotic ribosomal protein eL34 family. In terms of assembly, component of the large ribosomal subunit.

The protein localises to the cytoplasm. It is found in the cytosol. The protein resides in the endoplasmic reticulum. Functionally, component of the large ribosomal subunit. The ribosome is a large ribonucleoprotein complex responsible for the synthesis of proteins in the cell. The chain is Large ribosomal subunit protein eL34 (RPL34) from Sus scrofa (Pig).